Reading from the N-terminus, the 264-residue chain is tRNA1(Val) (adenine(37)-N6)-methyltransferase (264 aa).

This sequence belongs to the methyltransferase superfamily. tRNA (adenine-N(6)-)-methyltransferase family.

The protein resides in the cytoplasm. It catalyses the reaction adenosine(37) in tRNA1(Val) + S-adenosyl-L-methionine = N(6)-methyladenosine(37) in tRNA1(Val) + S-adenosyl-L-homocysteine + H(+). Its function is as follows. Specifically methylates the adenine in position 37 of tRNA(1)(Val) (anticodon cmo5UAC). The sequence is that of tRNA1(Val) (adenine(37)-N6)-methyltransferase from Shewanella pealeana (strain ATCC 700345 / ANG-SQ1).